Here is a 210-residue protein sequence, read N- to C-terminus: MPSNTPLPSSFDGDTDFYEENRWQKLTRRLKEEPLIPLGKSTHTLTLSPSPPSLHHPSTQKLTHPLTHPPGCILTTLALVGATRSIRAGDHNRTQRMFRARIYAQGFTLLAMVAGSMYWDSDRKKRKEFEGVLAEQKAKEKNEAWIKELEARDEEEKEMRRMRDERRRRAEGKSAASGLVVDAANAGAEEGEKTKNGIVDQMKGMVWGKK.

Residues 7–130 (LPSSFDGDTD…SDRKKRKEFE (124 aa)) enclose the HIG1 domain. Residues 38-67 (LGKSTHTLTLSPSPPSLHHPSTQKLTHPLT) form a disordered region. The next 2 helical transmembrane spans lie at 66–82 (LTHP…LVGA) and 102–119 (IYAQ…SMYW). A coiled-coil region spans residues 138-171 (AKEKNEAWIKELEARDEEEKEMRRMRDERRRRAE). A disordered region spans residues 152 to 192 (RDEEEKEMRRMRDERRRRAEGKSAASGLVVDAANAGAEEGE). Residues 157–172 (KEMRRMRDERRRRAEG) are compositionally biased toward basic and acidic residues.

This sequence belongs to the RCF1 family. As to quaternary structure, associates with the respiratory chain complex III/complex IV supercomplex.

It localises to the mitochondrion membrane. Functionally, cytochrome c oxidase subunit which plays a role in assembly of respiratory supercomplexes. This is Respiratory supercomplex factor 1, mitochondrial (rcf1) from Sclerotinia sclerotiorum (strain ATCC 18683 / 1980 / Ss-1) (White mold).